The chain runs to 401 residues: Heparan-sulfate 6-O-sulfotransferase 1 (401 aa).

Residues 1-4 (MVER) are Cytoplasmic-facing. Residues 5 to 27 (ASKFVLVVAGSACFMLILYQYAG) form a helical; Signal-anchor for type II membrane protein membrane-spanning segment. Residues 28 to 401 (PGLSLGAPGG…DYMSHIIEKW (374 aa)) are Lumenal-facing. 3'-phosphoadenylyl sulfate is bound at residue 83-91 (HIQKTGGTT). Residues 113 to 114 (KK), Arg-130, Trp-135, and His-140 each bind substrate. Catalysis depends on His-140, which acts as the Proton acceptor. Residues Arg-175 and Ser-183 each contribute to the 3'-phosphoadenylyl sulfate site. Residues His-187 and Trp-194 each contribute to the substrate site. Asn-254 carries N-linked (GlcNAc...) asparagine glycosylation. 307 to 309 (MQY) is a 3'-phosphoadenylyl sulfate binding site. An N-linked (GlcNAc...) asparagine glycan is attached at Asn-310. 313-314 (RA) serves as a coordination point for 3'-phosphoadenylyl sulfate. Positions 367-389 (ERLLHRSKEALPREDTEEPGRVP) are disordered.

It belongs to the sulfotransferase 6 family. In terms of processing, N-glycosylated.

The protein localises to the membrane. The catalysed reaction is alpha-D-glucosaminyl-[heparan sulfate](n) + 3'-phosphoadenylyl sulfate = 6-sulfo-alpha-D-glucosaminyl-[heparan sulfate](n) + adenosine 3',5'-bisphosphate + H(+). Its activity is regulated as follows. Inhibited by dithiothreitol and stimulated by protamine. Its function is as follows. 6-O-sulfation enzyme which catalyzes the transfer of sulfate from 3'-phosphoadenosine 5'-phosphosulfate (PAPS) to position 6 of the N-sulfoglucosamine residue (GlcNS) of heparan sulfate. Also transfers sulfate to CDSNS-heparin and performs the crucial step modification in the biosynthesis of anticoagulant heparan sulfate (HSact). Critical for normal neuronal development where it may play a role in neuron branching. May also play a role in limb development. May prefer iduronic acid. The polypeptide is Heparan-sulfate 6-O-sulfotransferase 1 (Cricetulus griseus (Chinese hamster)).